Consider the following 426-residue polypeptide: MPVSDDLLRATDPLVAGWIDRELNRQRSHLELIASENFTSAAVMAAQGSVLTNKYAEGLPSKRYYGGCEFVDAVEQIAIDRAKALFGAAHANVQPHSGAQANAAVFLALLERGDKILGMDLSHGGHLTHGSPVNQSGIYFEALHYGVDPASHRIDFDQVRELAHAHRPKLIICGYSAYPRVIDFECFREIADEVGAYLLADIAHIAGLVVAGVHPNPIPHCDVVTTTTHKTLRGPRGGLILTRDEALGKRFDKAVFPGTQGGPLEHVIAAKAVAFGEALQPEFKTYAADVVANARALAERLTARGLTLVSGGTDNHLMLVDLRSVDLTGKQADLLMSDVNITTNKNTIPFDPQSPFVTSGLRLGSPAMTTRGLGTTEFGEIGEIIANRLTQPTDARVVADCLERVASLCTRFALYPHLGRVVAPVG.

Residues Leu-121 and 125 to 127 each bind (6S)-5,6,7,8-tetrahydrofolate; that span reads GHL. Lys-230 carries the N6-(pyridoxal phosphate)lysine modification. (6S)-5,6,7,8-tetrahydrofolate is bound at residue 354–356; the sequence is SPF.

Belongs to the SHMT family. In terms of assembly, homodimer. Requires pyridoxal 5'-phosphate as cofactor.

The protein localises to the cytoplasm. It catalyses the reaction (6R)-5,10-methylene-5,6,7,8-tetrahydrofolate + glycine + H2O = (6S)-5,6,7,8-tetrahydrofolate + L-serine. Its pathway is one-carbon metabolism; tetrahydrofolate interconversion. The protein operates within amino-acid biosynthesis; glycine biosynthesis; glycine from L-serine: step 1/1. In terms of biological role, catalyzes the reversible interconversion of serine and glycine with tetrahydrofolate (THF) serving as the one-carbon carrier. This reaction serves as the major source of one-carbon groups required for the biosynthesis of purines, thymidylate, methionine, and other important biomolecules. Also exhibits THF-independent aldolase activity toward beta-hydroxyamino acids, producing glycine and aldehydes, via a retro-aldol mechanism. The chain is Serine hydroxymethyltransferase from Gloeobacter violaceus (strain ATCC 29082 / PCC 7421).